The following is a 62-amino-acid chain: Sperm protamine P1 (62 aa).

The disordered stretch occupies residues 1–62 (MARYRRRSRS…RYSRRGRRRY (62 aa)).

This sequence belongs to the protamine P1 family. Testis.

It is found in the nucleus. It localises to the chromosome. In terms of biological role, protamines substitute for histones in the chromatin of sperm during the haploid phase of spermatogenesis. They compact sperm DNA into a highly condensed, stable and inactive complex. This is Sperm protamine P1 (PRM1) from Sarcophilus harrisii (Tasmanian devil).